We begin with the raw amino-acid sequence, 947 residues long: Zinc finger protein 268 (947 aa).

The region spanning 81–152 is the KRAB domain; that stretch reads LSFMDVFVDF…QAQVPNQTCP (72 aa). Serine 178 carries the phosphoserine; by TBK1 modification. C2H2-type zinc fingers lie at residues 276-298, 304-326, 332-354, 360-382, 388-410, 416-438, 444-466, 472-494, 500-522, 528-550, 556-578, 584-606, 612-634, 640-662, 668-690, 696-718, 724-746, 752-774, 780-802, 808-830, 836-858, 864-886, 892-914, and 920-942; these read FGCS…QQTH, YGCN…QRIH, HECS…QRIH, YECC…QKTH, YVCN…ERIH, YECN…QRTH, YVCS…QGIH, YGCI…QRSH, YVCN…TRTH, HECN…QRIH, YECH…QRTH, YECT…QRTH, FECS…QRTH, YSCN…KGVH, YGCS…QRSH, YGCS…MRTH, HECR…QRIH, YECS…QRTH, YECN…ERTH, YKCS…QRMH, YGCN…QRTH, and CKCT…QRTH.

The protein belongs to the krueppel C2H2-type zinc-finger protein family. As to quaternary structure, interacts (via the KRAB domain) with TRIM28 (via the RBCC domain); the interaction increases ZNF268 nuclear localization activity. Isoform 2 interacts with CHUK and IKBKB; the interaction is further increased in a TNF-alpha-dependent manner. Interacts with TOLLIP; this interaction is impaired by ZNF268 phosphorylation at Ser-178. Forms a ternary complex with TBK1 and SETD4; the interaction between SETD4 and TBK1 is ZNF268-dependent and leads to TBK1 monomethylation. In terms of processing, phosphorylation at Ser-178 stabilizes the protein by interfering with its binding to TOLLIP, hence impairing its degradation by Tollip-mediated selective autophagy system. As to expression, overexpressed in ovarian cancer tissues compared to normal ovarian tissues. Isoform 1 and isoform 2 are expressed in squamous epithelium tissues. Isoform 2 is overexpressed in squamous cervical cancer (at protein level). Expressed in blood cells. Isoform 1 is expressed in pancreas, lung, skeletal muscle, heart, placenta, liver, kidney and brain. Isoform 2 expressed in chronic lymphocytic leukemia (CLL) and several tumor cell lines. Isoform 3 is expressed in several tumor cells. Isoform 5 is expressed in fetal liver and several tumor cells. Isoform 6 is weakly expressed in brain, lung amd small intestin and in several tumor cells. Isoform 7 is expressed in fetal liver and several tumor cells.

It localises to the nucleus. Its subcellular location is the cytoplasm. Functionally, acts as a transcriptional repressor. Inhibits erythroid differentiation and tumor cell proliferation. Plays a role during ovarian cancer development and progression. Its function is as follows. Contributes to cervical carcinogenesis in part through the TNF-alpha-induced NF-kappa-B signaling pathway by interacting with the I-kappa-B-kinase (IKK) core complex. Involved in the regulation of antiviral interferon signaling. During viral infection, recruits SETD4 to TBK1, leading to TBK1 monomethylation, which is critical for the assembly of TBK1 complex and IRF3 signaling. The chain is Zinc finger protein 268 (ZNF268) from Homo sapiens (Human).